The following is a 625-amino-acid chain: Beta-galactosidase large subunit (625 aa).

Residue E465 is the Proton donor of the active site. E533 functions as the Nucleophile in the catalytic mechanism.

It belongs to the glycosyl hydrolase 2 family. Heterodimer of a large (LacL) and a small subunit (LacM).

The enzyme catalyses Hydrolysis of terminal non-reducing beta-D-galactose residues in beta-D-galactosides.. Component of a beta-galactosidase. The protein is Beta-galactosidase large subunit of Latilactobacillus sakei (Lactobacillus sakei).